The following is a 76-amino-acid chain: Centromere protein W (76 aa).

It belongs to the CENP-W/WIP1 family. In terms of assembly, heterodimer with CENPT; this dimer coassembles with CENPS-CENPX heterodimers at centromeres to form the tetrameric CENP-T-W-S-X complex, which is a subcomplex of the large constitutive centromere-associated network (CCAN, also known as the interphase centromere complex or ICEN). Interacts with NPM1.

Its subcellular location is the nucleus. The protein localises to the chromosome. It is found in the centromere. It localises to the kinetochore. In terms of biological role, component of the CENPA-NAC (nucleosome-associated) complex, a complex that plays a central role in assembly of kinetochore proteins, mitotic progression and chromosome segregation. The CENPA-NAC complex recruits the CENPA-CAD (nucleosome distal) complex and may be involved in incorporation of newly synthesized CENPA into centromeres. Part of a nucleosome-associated complex that binds specifically to histone H3-containing nucleosomes at the centromere, as opposed to nucleosomes containing CENPA. Component of the heterotetrameric CENP-T-W-S-X complex that binds and supercoils DNA, and plays an important role in kinetochore assembly. CENPW has a fundamental role in kinetochore assembly and function. It is one of the inner kinetochore proteins, with most further proteins binding downstream. Required for normal chromosome organization and normal progress through mitosis. The sequence is that of Centromere protein W (CENPW) from Gallus gallus (Chicken).